A 654-amino-acid chain; its full sequence is DNA ligase (654 aa).

Residues 31 to 35 (DSEYD), 80 to 81 (SL), and Glu109 contribute to the NAD(+) site. Residue Lys111 is the N6-AMP-lysine intermediate of the active site. 4 residues coordinate NAD(+): Arg132, Glu166, Lys280, and Lys304. Positions 398, 401, 416, and 421 each coordinate Zn(2+). The BRCT domain maps to 579–654 (NIEGILSGKT…IWSEQDLLDL (76 aa)).

The protein belongs to the NAD-dependent DNA ligase family. LigA subfamily. Requires Mg(2+) as cofactor. Mn(2+) is required as a cofactor.

It carries out the reaction NAD(+) + (deoxyribonucleotide)n-3'-hydroxyl + 5'-phospho-(deoxyribonucleotide)m = (deoxyribonucleotide)n+m + AMP + beta-nicotinamide D-nucleotide.. DNA ligase that catalyzes the formation of phosphodiester linkages between 5'-phosphoryl and 3'-hydroxyl groups in double-stranded DNA using NAD as a coenzyme and as the energy source for the reaction. It is essential for DNA replication and repair of damaged DNA. This is DNA ligase from Lactococcus lactis subsp. lactis (strain IL1403) (Streptococcus lactis).